We begin with the raw amino-acid sequence, 470 residues long: Membrane-bound lytic murein transglycosylase F (470 aa).

An N-terminal signal peptide occupies residues 1–24 (MPSLKTKGAAGKFASLLLVLALSA). A non-LT domain region spans residues 25 to 262 (CSRPAPPPET…RALERYFGHV (238 aa)). Residues 263–470 (KRLGSSDILG…RGEDGLPPPG (208 aa)) form an LT domain region. Glu309 is an active-site residue.

It in the N-terminal section; belongs to the bacterial solute-binding protein 3 family. The protein in the C-terminal section; belongs to the transglycosylase Slt family.

Its subcellular location is the cell outer membrane. It carries out the reaction Exolytic cleavage of the (1-&gt;4)-beta-glycosidic linkage between N-acetylmuramic acid (MurNAc) and N-acetylglucosamine (GlcNAc) residues in peptidoglycan, from either the reducing or the non-reducing ends of the peptidoglycan chains, with concomitant formation of a 1,6-anhydrobond in the MurNAc residue.. Murein-degrading enzyme that degrades murein glycan strands and insoluble, high-molecular weight murein sacculi, with the concomitant formation of a 1,6-anhydromuramoyl product. Lytic transglycosylases (LTs) play an integral role in the metabolism of the peptidoglycan (PG) sacculus. Their lytic action creates space within the PG sacculus to allow for its expansion as well as for the insertion of various structures such as secretion systems and flagella. In Thiobacillus denitrificans (strain ATCC 25259 / T1), this protein is Membrane-bound lytic murein transglycosylase F.